A 968-amino-acid polypeptide reads, in one-letter code: Glycine dehydrogenase (decarboxylating) (968 aa).

Lys-712 bears the N6-(pyridoxal phosphate)lysine mark.

The protein belongs to the GcvP family. The glycine cleavage system is composed of four proteins: P, T, L and H. Pyridoxal 5'-phosphate serves as cofactor.

It catalyses the reaction N(6)-[(R)-lipoyl]-L-lysyl-[glycine-cleavage complex H protein] + glycine + H(+) = N(6)-[(R)-S(8)-aminomethyldihydrolipoyl]-L-lysyl-[glycine-cleavage complex H protein] + CO2. The glycine cleavage system catalyzes the degradation of glycine. The P protein binds the alpha-amino group of glycine through its pyridoxal phosphate cofactor; CO(2) is released and the remaining methylamine moiety is then transferred to the lipoamide cofactor of the H protein. This is Glycine dehydrogenase (decarboxylating) from Prochlorococcus marinus (strain NATL2A).